The following is a 147-amino-acid chain: Hemoglobin subunit beta (147 aa).

Residues 3-147 (EWTDDERAII…VVSALGRQYH (145 aa)) enclose the Globin domain. Residues histidine 64 and histidine 93 each contribute to the heme b site.

Belongs to the globin family. As to quaternary structure, heterotetramer of two alpha chains and two beta chains. In terms of tissue distribution, red blood cells.

Its function is as follows. Involved in oxygen transport from gills to the various peripheral tissues. This chain is Hemoglobin subunit beta (hbb), found in Merlangius merlangus (Whiting).